The sequence spans 367 residues: Chorismate synthase (367 aa).

Arg48 provides a ligand contact to NADP(+). FMN contacts are provided by residues 125 to 127 (RSS), 238 to 239 (NA), Gly278, 293 to 297 (KPTSS), and Arg319.

The protein belongs to the chorismate synthase family. Homotetramer. The cofactor is FMNH2.

It carries out the reaction 5-O-(1-carboxyvinyl)-3-phosphoshikimate = chorismate + phosphate. It participates in metabolic intermediate biosynthesis; chorismate biosynthesis; chorismate from D-erythrose 4-phosphate and phosphoenolpyruvate: step 7/7. Catalyzes the anti-1,4-elimination of the C-3 phosphate and the C-6 proR hydrogen from 5-enolpyruvylshikimate-3-phosphate (EPSP) to yield chorismate, which is the branch point compound that serves as the starting substrate for the three terminal pathways of aromatic amino acid biosynthesis. This reaction introduces a second double bond into the aromatic ring system. The sequence is that of Chorismate synthase from Halorhodospira halophila (strain DSM 244 / SL1) (Ectothiorhodospira halophila (strain DSM 244 / SL1)).